The following is a 124-amino-acid chain: Autophagy-related protein 8 (124 aa).

Glycine 116 carries Phosphatidylethanolamine amidated glycine lipidation. Positions 117 to 124 are cleaved as a propeptide — removed in mature form; the sequence is GAGPLLEK.

It belongs to the ATG8 family. In terms of assembly, conjugation to phosphatidylethanolamine (PE) leads to homodimerization. Interacts with ATG1, ATG3, ATG4, ATG7 and ATG12. In terms of processing, the C-terminal 8 residues of ATG8 are removed by ATG4 to expose Gly-116 at the C-terminus. This Gly-116 forms then a thioester bond with the 'Cys-550' of ATG7 (E1-like activating enzyme) before being transferred to the 'Cys-244' of ATG3 (the specific E2 conjugating enzyme), in order to be finally amidated with phosphatidylethanolamine. This lipid modification anchors ATG8 to membranes and can be reversed by ATG4, releasing soluble ATG8.

The protein localises to the cytoplasmic vesicle. It is found in the cvt vesicle membrane. Its subcellular location is the autophagosome membrane. It localises to the vacuole membrane. Its function is as follows. Ubiquitin-like modifier involved in cytoplasm to vacuole transport (Cvt) vesicles and autophagosome formation. With ATG4, mediates the delivery of the vesicles and autophagosomes to the vacuole via the microtubule cytoskeleton. Required for selective autophagic degradation of the nucleus (nucleophagy) as well as for mitophagy which contributes to regulate mitochondrial quantity and quality by eliminating the mitochondria to a basal level to fulfill cellular energy requirements and preventing excess ROS production. Also participates in membrane fusion events that take place in the early secretory pathway. Also involved in endoplasmic reticulum-specific autophagic process and is essential for the survival of cells subjected to severe ER stress. The ATG8-PE conjugate mediates tethering between adjacent membranes and stimulates membrane hemifusion, leading to expansion of the autophagosomal membrane during autophagy. Moreover not only conjugation, but also subsequent ATG8-PE deconjugation is an important step required to facilitate multiple events during macroautophagy, and especially for efficient autophagosome biogenesis, the assembly of ATG9-containing tubulovesicular clusters into phagophores/autophagosomes, and for the disassembly of PAS-associated ATG components. The chain is Autophagy-related protein 8 from Kluyveromyces marxianus (strain DMKU3-1042 / BCC 29191 / NBRC 104275) (Yeast).